The sequence spans 255 residues: Type III pantothenate kinase (255 aa).

Position 6–13 (6–13 (DVGNSYTM)) interacts with ATP. Substrate is bound at residue 107–110 (GADR). Asp-109 (proton acceptor) is an active-site residue. Position 129 (Asp-129) interacts with K(+). Thr-132 contacts ATP. Residue Thr-183 coordinates substrate.

The protein belongs to the type III pantothenate kinase family. Homodimer. The cofactor is NH4(+). Requires K(+) as cofactor.

It localises to the cytoplasm. It catalyses the reaction (R)-pantothenate + ATP = (R)-4'-phosphopantothenate + ADP + H(+). It functions in the pathway cofactor biosynthesis; coenzyme A biosynthesis; CoA from (R)-pantothenate: step 1/5. Functionally, catalyzes the phosphorylation of pantothenate (Pan), the first step in CoA biosynthesis. The polypeptide is Type III pantothenate kinase (Petrotoga mobilis (strain DSM 10674 / SJ95)).